Reading from the N-terminus, the 385-residue chain is Probable dual-specificity RNA methyltransferase RlmN (385 aa).

The disordered stretch occupies residues 1–24 (MTATTAESGNLLPLVSGRSRPPRH). The active-site Proton acceptor is Glu114. Positions 120–364 (YPQRATVCVS…AATVRDTRGR (245 aa)) constitute a Radical SAM core domain. The cysteines at positions 127 and 370 are disulfide-linked. Residues Cys134, Cys138, and Cys141 each contribute to the [4Fe-4S] cluster site. S-adenosyl-L-methionine is bound by residues 194–195 (GE), Ser228, 251–253 (SLH), and Asn327. Residue Cys370 is the S-methylcysteine intermediate of the active site.

The protein belongs to the radical SAM superfamily. RlmN family. It depends on [4Fe-4S] cluster as a cofactor.

It is found in the cytoplasm. It catalyses the reaction adenosine(2503) in 23S rRNA + 2 reduced [2Fe-2S]-[ferredoxin] + 2 S-adenosyl-L-methionine = 2-methyladenosine(2503) in 23S rRNA + 5'-deoxyadenosine + L-methionine + 2 oxidized [2Fe-2S]-[ferredoxin] + S-adenosyl-L-homocysteine. The enzyme catalyses adenosine(37) in tRNA + 2 reduced [2Fe-2S]-[ferredoxin] + 2 S-adenosyl-L-methionine = 2-methyladenosine(37) in tRNA + 5'-deoxyadenosine + L-methionine + 2 oxidized [2Fe-2S]-[ferredoxin] + S-adenosyl-L-homocysteine. Its function is as follows. Specifically methylates position 2 of adenine 2503 in 23S rRNA and position 2 of adenine 37 in tRNAs. The polypeptide is Probable dual-specificity RNA methyltransferase RlmN (Parafrankia sp. (strain EAN1pec)).